Consider the following 240-residue polypeptide: PF03932 family protein CutC (240 aa).

This sequence belongs to the CutC family.

It is found in the cytoplasm. This chain is PF03932 family protein CutC, found in Xanthomonas campestris pv. campestris (strain 8004).